Here is a 172-residue protein sequence, read N- to C-terminus: uncharacterized protein (172 aa).

The 169-residue stretch at 3–171 (KKVAIILADE…FNREIVKKLE (169 aa)) folds into the PfpI endopeptidase domain.

It belongs to the peptidase C56 family.

This is an uncharacterized protein from Staphylococcus epidermidis (strain ATCC 35984 / DSM 28319 / BCRC 17069 / CCUG 31568 / BM 3577 / RP62A).